Here is a 94-residue protein sequence, read N- to C-terminus: Enhancer of yellow 2 transcription factor (94 aa).

The protein belongs to the ENY2 family. In terms of assembly, component of the nuclear pore complex (NPC)-associated AMEX complex (anchoring and mRNA export complex), composed of at least e(y)2 and xmas-2. Component of the SAGA transcription coactivator-HAT complexes, at least composed of Ada2b, e(y)2, Pcaf/Gcn5, Taf10 and Nipped-A/Trrap. Within the SAGA complex, e(y)2, Sgf11, and not/nonstop form an additional subcomplex of SAGA called the DUB module (deubiquitination module). Component of the THO complex, composed of at least e(y)2, HPR1, THO2, THOC5, THOC6 and THOC7. Interacts with e(y)1. Interacts with su(Hw) (via zinc fingers). Interacts with xmas-2; required for localization to the nuclear periphery. Interacts with the nuclear pore complex (NPC).

It is found in the nucleus. It localises to the nucleoplasm. The protein resides in the cytoplasm. In terms of biological role, involved in mRNA export coupled transcription activation by association with both the AMEX and the SAGA complexes. The SAGA complex is a multiprotein complex that activates transcription by remodeling chromatin and mediating histone acetylation and deubiquitination. Within the SAGA complex, participates in a subcomplex that specifically deubiquitinates histone H2B. The SAGA complex is recruited to specific gene promoters by activators, where it is required for transcription. Required for nuclear receptor-mediated transactivation. Involved in transcription elongation by recruiting the THO complex onto nascent mRNA. The AMEX complex functions in docking export-competent ribonucleoprotein particles (mRNPs) to the nuclear entrance of the nuclear pore complex (nuclear basket). AMEX participates in mRNA export and accurate chromatin positioning in the nucleus by tethering genes to the nuclear periphery. This chain is Enhancer of yellow 2 transcription factor, found in Drosophila mojavensis (Fruit fly).